The following is a 437-amino-acid chain: Glutamyl-tRNA reductase (437 aa).

Residues 49-52 (TCNR), Ser-109, 114-116 (EVQ), and Gln-120 contribute to the substrate site. Residue Cys-50 is the Nucleophile of the active site. 189–194 (GAGDTA) provides a ligand contact to NADP(+).

Belongs to the glutamyl-tRNA reductase family. In terms of assembly, homodimer.

It catalyses the reaction (S)-4-amino-5-oxopentanoate + tRNA(Glu) + NADP(+) = L-glutamyl-tRNA(Glu) + NADPH + H(+). Its pathway is porphyrin-containing compound metabolism; protoporphyrin-IX biosynthesis; 5-aminolevulinate from L-glutamyl-tRNA(Glu): step 1/2. It participates in porphyrin-containing compound metabolism; chlorophyll biosynthesis. Its function is as follows. Catalyzes the NADPH-dependent reduction of glutamyl-tRNA(Glu) to glutamate 1-semialdehyde (GSA). This is Glutamyl-tRNA reductase from Chloroherpeton thalassium (strain ATCC 35110 / GB-78).